The sequence spans 407 residues: O-antigen polymerase (407 aa).

11 helical membrane passes run L2–V22, V31–V51, Y63–Y83, Y101–M121, Y141–F161, L168–G185, I190–I204, F211–Y231, A319–L339, F356–F376, and I382–L402.

The protein localises to the cell inner membrane. It carries out the reaction n lipid-linked O-antigen repeat units = a lipid-linked O antigen + (n-1) polyisoprenyl diphosphate.. It functions in the pathway bacterial outer membrane biogenesis; LPS O-antigen biosynthesis. Its function is as follows. Polymerase involved in the biosynthesis of the lipopolysaccharide (LPS). Catalyzes the polymerization of the O-antigen repeat units on the periplasmic face of the inner membrane, leading to the formation of the lipid-linked O-antigen molecule. In Salmonella typhi, this protein is O-antigen polymerase (rfc).